Consider the following 967-residue polypeptide: Glutamate receptor 2.6 (967 aa).

A signal peptide spans 1–31 (MSLFNHLLSRALPLWLLFFINFLVLLGKSQQ). Residues 32-590 (EVLQVQVGIV…WVFLKPLTRE (559 aa)) are Extracellular-facing. Residues Asn45, Asn57, Asn121, Asn336, Asn345, Asn424, and Asn550 are each glycosylated (N-linked (GlcNAc...) asparagine). A helical membrane pass occupies residues 591–611 (LWFLTAASFLYIGIMVWIFEY). The Cytoplasmic segment spans residues 612-621 (QASGDFRKQS). Residues 622–642 (IINKISNVFYFSFSTLFFAHM) traverse the membrane as a helical segment. The Cytoplasmic portion of the chain corresponds to 643–651 (RPSESIFTR). A helical transmembrane segment spans residues 652–672 (VLVVVWCFVLLILTQSYTATL). Topologically, residues 673–832 (TSMLTVQELR…DSPIRLDHHS (160 aa)) are extracellular. An N-linked (GlcNAc...) asparagine glycan is attached at Asn795. A helical membrane pass occupies residues 833 to 853 (FEALFTIVFVVSMLLLLAMLV). Residues 854 to 967 (CRRYRQESKS…AALFSRIKSA (114 aa)) are Cytoplasmic-facing. A compositionally biased stretch (polar residues) spans 864-874 (GEINANNSPTD). The segment at 864–913 (GEINANNSPTDGNMRAPPNQPTDDNMRAPTSPPIDDQVLEPPGPALNEAD) is disordered.

Belongs to the glutamate-gated ion channel (TC 1.A.10.1) family. As to quaternary structure, may form heteromers. Expressed predominantly in roots.

The protein resides in the membrane. In terms of biological role, glutamate-gated receptor that probably acts as a non-selective cation channel. May be involved in light-signal transduction and calcium homeostasis via the regulation of calcium influx into cells. The protein is Glutamate receptor 2.6 (GLR2.6) of Arabidopsis thaliana (Mouse-ear cress).